Here is a 158-residue protein sequence, read N- to C-terminus: MFMSSIIELVTAAITPAIQTPYELVDVEYGKMGGDYVLSIFVDKEGGISLQDTADLSEKISPILDTIKPDPFPDQYMLEVTSPGLERPLKTADAVEKAVGKYIHVKLYQAIDKLKVFEGTLLSFDGTDLIMEYMDKTRKKEVTIPYQTVAKARLAVKL.

It belongs to the RimP family.

The protein localises to the cytoplasm. In terms of biological role, required for maturation of 30S ribosomal subunits. This chain is Ribosome maturation factor RimP, found in Streptococcus suis (strain 05ZYH33).